We begin with the raw amino-acid sequence, 230 residues long: 2,3-bisphosphoglycerate-dependent phosphoglycerate mutase (230 aa).

Substrate contacts are provided by residues 8-15 (RHGESEWN), 21-22 (TG), arginine 60, 87-90 (ERHY), lysine 98, 114-115 (RR), and 183-184 (GN). Residue histidine 9 is the Tele-phosphohistidine intermediate of the active site. The active-site Proton donor/acceptor is glutamate 87.

Belongs to the phosphoglycerate mutase family. BPG-dependent PGAM subfamily.

The catalysed reaction is (2R)-2-phosphoglycerate = (2R)-3-phosphoglycerate. Its pathway is carbohydrate degradation; glycolysis; pyruvate from D-glyceraldehyde 3-phosphate: step 3/5. Its function is as follows. Catalyzes the interconversion of 2-phosphoglycerate and 3-phosphoglycerate. The chain is 2,3-bisphosphoglycerate-dependent phosphoglycerate mutase from Streptococcus pneumoniae (strain ATCC BAA-255 / R6).